Reading from the N-terminus, the 267-residue chain is 3-methyl-2-oxobutanoate hydroxymethyltransferase (267 aa).

Residues Asp-46 and Asp-85 each coordinate Mg(2+). Residues 46–47 (DS), Asp-85, and Lys-115 each bind 3-methyl-2-oxobutanoate. Glu-117 serves as a coordination point for Mg(2+). Residue Glu-184 is the Proton acceptor of the active site.

It belongs to the PanB family. Homodecamer; pentamer of dimers. Requires Mg(2+) as cofactor.

It localises to the cytoplasm. The enzyme catalyses 3-methyl-2-oxobutanoate + (6R)-5,10-methylene-5,6,7,8-tetrahydrofolate + H2O = 2-dehydropantoate + (6S)-5,6,7,8-tetrahydrofolate. Its pathway is cofactor biosynthesis; (R)-pantothenate biosynthesis; (R)-pantoate from 3-methyl-2-oxobutanoate: step 1/2. Its function is as follows. Catalyzes the reversible reaction in which hydroxymethyl group from 5,10-methylenetetrahydrofolate is transferred onto alpha-ketoisovalerate to form ketopantoate. In Geobacter sulfurreducens (strain ATCC 51573 / DSM 12127 / PCA), this protein is 3-methyl-2-oxobutanoate hydroxymethyltransferase.